We begin with the raw amino-acid sequence, 668 residues long: DNA ligase (668 aa).

NAD(+) contacts are provided by residues 34 to 38 (DAEYD), 83 to 84 (SL), and Glu-117. Lys-119 functions as the N6-AMP-lysine intermediate in the catalytic mechanism. The NAD(+) site is built by Arg-140, Glu-177, Lys-293, and Lys-317. Residues Cys-411, Cys-414, Cys-429, and Cys-434 each contribute to the Zn(2+) site. The 78-residue stretch at 591-668 (RVGGRFTGKT…SEDDFLELMQ (78 aa)) folds into the BRCT domain.

The protein belongs to the NAD-dependent DNA ligase family. LigA subfamily. The cofactor is Mg(2+). Requires Mn(2+) as cofactor.

The catalysed reaction is NAD(+) + (deoxyribonucleotide)n-3'-hydroxyl + 5'-phospho-(deoxyribonucleotide)m = (deoxyribonucleotide)n+m + AMP + beta-nicotinamide D-nucleotide.. In terms of biological role, DNA ligase that catalyzes the formation of phosphodiester linkages between 5'-phosphoryl and 3'-hydroxyl groups in double-stranded DNA using NAD as a coenzyme and as the energy source for the reaction. It is essential for DNA replication and repair of damaged DNA. The sequence is that of DNA ligase from Citrifermentans bemidjiense (strain ATCC BAA-1014 / DSM 16622 / JCM 12645 / Bem) (Geobacter bemidjiensis).